A 93-amino-acid polypeptide reads, in one-letter code: MKQSLAVKTFEDLFAELSERARTRPTDSATVASLDGGIHALGKKILEEAGEVWLAAEHEPKEVLAEEISQLLYWTQVLMISRGLSLDDVYRKL.

This sequence belongs to the PRA-PH family.

It localises to the cytoplasm. It catalyses the reaction 1-(5-phospho-beta-D-ribosyl)-ATP + H2O = 1-(5-phospho-beta-D-ribosyl)-5'-AMP + diphosphate + H(+). The protein operates within amino-acid biosynthesis; L-histidine biosynthesis; L-histidine from 5-phospho-alpha-D-ribose 1-diphosphate: step 2/9. The polypeptide is Phosphoribosyl-ATP pyrophosphatase (Mycobacterium leprae (strain Br4923)).